We begin with the raw amino-acid sequence, 409 residues long: MTNSVKTNGPSSSDMEYYYKSLYPFKHIFNWLNHSPKPSRDMINREFAMAFRSGAYKRYNSFNSVQDFKAQIEKANPDRFEIGAIYNKPPRERDTLLKSELKALEKELVFDIDMDDYDAFRTCCSGAQVCSKCWKFISLAMKITNTALREDFGYKDFIWVFSGRRGAHCWVSDKRARALTDVQRRNVLDYVNVIRDRNTDKRLALKRPYHPHLARSLEQLKPFFVSIMLEEQNPWEDDQHAIQTLLPALYDKQLIDSLKKYWLDNPRRSSKEKWNDIDQIATSLFKGPKQDSHIIKLRECKEDLVLMTLYPKLDVEVTKQTIHLLKAPFCIHPATGNVCVPIDESFAPEKAPKLIDLQTEMEKNNDVSLTALQPFINQFQAYVSSLLKNELGSVKREREDDDEPASLDF.

Catalysis depends on residues Glu46, Asp111, and Asp113. Residues 123–133 carry the Zinc knuckle motif motif; it reads CCSGAQVCSKC.

This sequence belongs to the eukaryotic-type primase small subunit family. DNA polymerase alpha:primase is a four subunit enzyme complex, which is assembled throughout the cell cycle, and consists of the two DNA polymerase subunits A POL1 and B POL12, and the DNA primase large PRI2 and small PRI1 subunits.

Its function is as follows. DNA primase is the polymerase that synthesizes small RNA primers for the Okazaki fragments made during discontinuous DNA replication. In a complex with DNA polymerase alpha (DNA polymerase alpha:primase) constitutes a replicative polymerase. Both primase components participate in formation of the active center, but the ATP-binding site is exclusively located on p48. The sequence is that of DNA primase small subunit (PRI1) from Saccharomyces cerevisiae (strain ATCC 204508 / S288c) (Baker's yeast).